Reading from the N-terminus, the 578-residue chain is Vi polysaccharide biosynthesis protein VipC/TviE (578 aa).

The protein operates within glycan metabolism; Vi-antigen biosynthesis. Its pathway is capsule biogenesis; capsule polysaccharide biosynthesis. The chain is Vi polysaccharide biosynthesis protein VipC/TviE (vipC) from Salmonella typhi.